We begin with the raw amino-acid sequence, 377 residues long: Protein RecA (377 aa).

66 to 73 (GPESSGKT) contacts ATP. The interval 329-377 (VGVRPEEPTAEPGADAAVTSAAAATDDTAKTVSAPAAKTTKSKAAAAKS) is disordered. Residues 342–377 (ADAAVTSAAAATDDTAKTVSAPAAKTTKSKAAAAKS) show a composition bias toward low complexity.

This sequence belongs to the RecA family.

The protein resides in the cytoplasm. Functionally, can catalyze the hydrolysis of ATP in the presence of single-stranded DNA, the ATP-dependent uptake of single-stranded DNA by duplex DNA, and the ATP-dependent hybridization of homologous single-stranded DNAs. It interacts with LexA causing its activation and leading to its autocatalytic cleavage. In Streptomyces avermitilis (strain ATCC 31267 / DSM 46492 / JCM 5070 / NBRC 14893 / NCIMB 12804 / NRRL 8165 / MA-4680), this protein is Protein RecA.